Consider the following 365-residue polypeptide: Aminomethyltransferase (365 aa).

This sequence belongs to the GcvT family. The glycine cleavage system is composed of four proteins: P, T, L and H.

The enzyme catalyses N(6)-[(R)-S(8)-aminomethyldihydrolipoyl]-L-lysyl-[protein] + (6S)-5,6,7,8-tetrahydrofolate = N(6)-[(R)-dihydrolipoyl]-L-lysyl-[protein] + (6R)-5,10-methylene-5,6,7,8-tetrahydrofolate + NH4(+). Its function is as follows. The glycine cleavage system catalyzes the degradation of glycine. This Aeromonas salmonicida (strain A449) protein is Aminomethyltransferase.